The chain runs to 474 residues: NAD(P) transhydrogenase subunit beta (474 aa).

The next 9 membrane-spanning stretches (helical) occupy residues 4-24 (GLVQ…LAGL), 46-66 (IATI…AMII), 83-103 (MPEL…LVGF), 132-152 (VLTN…AVTF), 181-200 (LAAL…NPES), 202-222 (FPVL…VASI), 229-249 (VVVS…GFIL), 253-273 (LLIV…YIMC), and 321-341 (VIIT…VADI).

This sequence belongs to the PNT beta subunit family. In terms of assembly, heterodimer of an alpha and a beta chain.

It localises to the cell inner membrane. The catalysed reaction is NAD(+) + NADPH + H(+)(in) = NADH + NADP(+) + H(+)(out). The transhydrogenation between NADH and NADP is coupled to respiration and ATP hydrolysis and functions as a proton pump across the membrane. This chain is NAD(P) transhydrogenase subunit beta (pntB), found in Haemophilus influenzae (strain ATCC 51907 / DSM 11121 / KW20 / Rd).